The following is a 213-amino-acid chain: Sclerostin (213 aa).

The first 23 residues, 1-23 (MQLPLALCLVCLLVHTAFRVVEG), serve as a signal peptide directing secretion. A disordered region spans residues 41–71 (GEYPEPPPELENNKTMNRAENGGRPPHHPFE). Asparagine 53 is a glycosylation site (N-linked (GlcNAc...) asparagine). 4 disulfides stabilise this stretch: cysteine 80-cysteine 134, cysteine 94-cysteine 148, cysteine 105-cysteine 165, and cysteine 109-cysteine 167. One can recognise a CTCK domain in the interval 82-172 (ELHFTRYVTD…ASCKCKRLTR (91 aa)). The N-linked (GlcNAc...) asparagine glycan is linked to asparagine 175. Positions 178-213 (ELKDFGTEAARPQKGRKPRPRARSAKANQAELENAY) are disordered. A compositionally biased stretch (basic residues) spans 190 to 201 (QKGRKPRPRARS).

Belongs to the sclerostin family. Interacts with LRP4 (via the extracellular domain); the interaction facilitates the inhibition of Wnt signaling. Interacts with LRP5 (via the first two YWTD-EGF repeat domains); the interaction inhibits Wnt-mediated signaling. Interacts with LRP6. In terms of tissue distribution, widely expressed at low levels with highest levels in bone, cartilage, kidney, liver, bone marrow and primary osteoblasts differentiated for 21 days. Detected in the subendothelial layer of the aortic intima (at protein level).

The protein resides in the secreted. It localises to the extracellular space. Its subcellular location is the extracellular matrix. In terms of biological role, negative regulator of bone growth that acts through inhibition of Wnt signaling and bone formation. The protein is Sclerostin of Homo sapiens (Human).